The following is a 639-amino-acid chain: Polyvinylalcohol dehydrogenase (639 aa).

Positions 1 to 33 are cleaved as a signal peptide; it reads MQQNIERNQVSMTTSRFVWGAVMALVALGSASA. The Cytochrome c domain maps to 36-152; it reads LNLPDGAALY…TPDQWNGWGA (117 aa). Heme contacts are provided by cysteine 49, cysteine 52, and histidine 53.

The protein belongs to the bacterial PQQ dehydrogenase family. Monomer. Requires pyrroloquinoline quinone as cofactor.

Its subcellular location is the cytoplasm. The catalysed reaction is a polyvinyl alcohol + 2n Fe(III)-[cytochrome c] = an oxidized polyvinyl alcohol + 2n Fe(II)-[cytochrome c] + 2n H(+). Functionally, catalyzes the oxidation of polyvinyl alcohol (PVA) in the polyvinyl alcohol degradation pathway. This Pseudomonas sp protein is Polyvinylalcohol dehydrogenase (pvaA).